Reading from the N-terminus, the 254-residue chain is Membrane protein US20 (254 aa).

The next 7 membrane-spanning stretches (helical) occupy residues 31-51 (AIFIFQLAFSFGLGSVFWLGF), 62-82 (YSFFLTVLVPIVCMFITYTLG), 89-109 (ATVLFIYLLANSLTAAIFQMC), 114-134 (VLVGSYVMTLALFISFTGLAF), 143-163 (WKCISCVYVVMLLSFLTLALL), 178-198 (AFSISFFLGILAYDSLMVIFF), and 208-228 (AVCLYLDSMAIFLTLLLMLSG).

Its subcellular location is the host membrane. This Homo sapiens (Human) protein is Membrane protein US20 (US20).